The primary structure comprises 144 residues: Large ribosomal subunit protein uL13 (144 aa).

Belongs to the universal ribosomal protein uL13 family. In terms of assembly, part of the 50S ribosomal subunit.

Functionally, this protein is one of the early assembly proteins of the 50S ribosomal subunit, although it is not seen to bind rRNA by itself. It is important during the early stages of 50S assembly. The polypeptide is Large ribosomal subunit protein uL13 (Mycoplasmopsis agalactiae (strain NCTC 10123 / CIP 59.7 / PG2) (Mycoplasma agalactiae)).